Consider the following 396-residue polypeptide: Elongation factor Tu 1 (396 aa).

The 197-residue stretch at 10–206 (KPHINVGTIG…AMDAHIPQPE (197 aa)) folds into the tr-type G domain. Residues 19 to 26 (GHVDHGKT) are G1. 19–26 (GHVDHGKT) contacts GTP. Residue threonine 26 participates in Mg(2+) binding. The segment at 60–64 (GITIA) is G2. The interval 81–84 (DCPG) is G3. GTP contacts are provided by residues 81–85 (DCPGH) and 136–139 (NKAD). A G4 region spans residues 136–139 (NKAD). Residues 174-176 (SAL) are G5.

It belongs to the TRAFAC class translation factor GTPase superfamily. Classic translation factor GTPase family. EF-Tu/EF-1A subfamily. As to quaternary structure, monomer.

Its subcellular location is the cytoplasm. It catalyses the reaction GTP + H2O = GDP + phosphate + H(+). GTP hydrolase that promotes the GTP-dependent binding of aminoacyl-tRNA to the A-site of ribosomes during protein biosynthesis. The sequence is that of Elongation factor Tu 1 from Halorhodospira halophila (strain DSM 244 / SL1) (Ectothiorhodospira halophila (strain DSM 244 / SL1)).